We begin with the raw amino-acid sequence, 227 residues long: Cytochrome c oxidase subunit 2 (227 aa).

The Mitochondrial intermembrane segment spans residues 1-14; sequence MAYPFQLGFQDATS. A helical membrane pass occupies residues 15–45; sequence PIMEELLHFHDHTLMIVFLISSLVLYIISLM. Over 46 to 59 the chain is Mitochondrial matrix; that stretch reads LTTKLTHTSTMDAQ. A helical transmembrane segment spans residues 60–87; sequence EVETIWTILPAIILILIALPSLRILYMM. The Mitochondrial intermembrane portion of the chain corresponds to 88-227; that stretch reads DEINNPSLTV…YFEKWSASML (140 aa). H161, C196, E198, C200, H204, and M207 together coordinate Cu cation. E198 lines the Mg(2+) pocket. Phosphotyrosine is present on Y218.

It belongs to the cytochrome c oxidase subunit 2 family. As to quaternary structure, component of the cytochrome c oxidase (complex IV, CIV), a multisubunit enzyme composed of 14 subunits. The complex is composed of a catalytic core of 3 subunits MT-CO1, MT-CO2 and MT-CO3, encoded in the mitochondrial DNA, and 11 supernumerary subunits COX4I, COX5A, COX5B, COX6A, COX6B, COX6C, COX7A, COX7B, COX7C, COX8 and NDUFA4, which are encoded in the nuclear genome. The complex exists as a monomer or a dimer and forms supercomplexes (SCs) in the inner mitochondrial membrane with NADH-ubiquinone oxidoreductase (complex I, CI) and ubiquinol-cytochrome c oxidoreductase (cytochrome b-c1 complex, complex III, CIII), resulting in different assemblies (supercomplex SCI(1)III(2)IV(1) and megacomplex MCI(2)III(2)IV(2)). Found in a complex with TMEM177, COA6, COX18, COX20, SCO1 and SCO2. Interacts with TMEM177 in a COX20-dependent manner. Interacts with COX20. Interacts with COX16. It depends on Cu cation as a cofactor.

The protein resides in the mitochondrion inner membrane. The catalysed reaction is 4 Fe(II)-[cytochrome c] + O2 + 8 H(+)(in) = 4 Fe(III)-[cytochrome c] + 2 H2O + 4 H(+)(out). Functionally, component of the cytochrome c oxidase, the last enzyme in the mitochondrial electron transport chain which drives oxidative phosphorylation. The respiratory chain contains 3 multisubunit complexes succinate dehydrogenase (complex II, CII), ubiquinol-cytochrome c oxidoreductase (cytochrome b-c1 complex, complex III, CIII) and cytochrome c oxidase (complex IV, CIV), that cooperate to transfer electrons derived from NADH and succinate to molecular oxygen, creating an electrochemical gradient over the inner membrane that drives transmembrane transport and the ATP synthase. Cytochrome c oxidase is the component of the respiratory chain that catalyzes the reduction of oxygen to water. Electrons originating from reduced cytochrome c in the intermembrane space (IMS) are transferred via the dinuclear copper A center (CU(A)) of subunit 2 and heme A of subunit 1 to the active site in subunit 1, a binuclear center (BNC) formed by heme A3 and copper B (CU(B)). The BNC reduces molecular oxygen to 2 water molecules using 4 electrons from cytochrome c in the IMS and 4 protons from the mitochondrial matrix. The polypeptide is Cytochrome c oxidase subunit 2 (MT-CO2) (Felis catus (Cat)).